We begin with the raw amino-acid sequence, 311 residues long: Porphobilinogen deaminase (311 aa).

The residue at position 241 (Cys-241) is an S-(dipyrrolylmethanemethyl)cysteine.

It belongs to the HMBS family. In terms of assembly, monomer. Dipyrromethane is required as a cofactor.

It catalyses the reaction 4 porphobilinogen + H2O = hydroxymethylbilane + 4 NH4(+). It functions in the pathway porphyrin-containing compound metabolism; protoporphyrin-IX biosynthesis; coproporphyrinogen-III from 5-aminolevulinate: step 2/4. Its function is as follows. Tetrapolymerization of the monopyrrole PBG into the hydroxymethylbilane pre-uroporphyrinogen in several discrete steps. The polypeptide is Porphobilinogen deaminase (Bacillus pumilus (strain SAFR-032)).